A 109-amino-acid chain; its full sequence is uncharacterized protein (109 aa).

The HTH cro/C1-type domain maps to 42–100; the sequence is LEEKLKQEKIDRKYLAEVTNIPYTTVSRIMRAEANREFNPEIDTILKIAKYFNCTMDEV. A DNA-binding region (H-T-H motif) is located at residues 53–72; that stretch reads RKYLAEVTNIPYTTVSRIMR.

This is an uncharacterized protein from Rickettsia conorii (strain ATCC VR-613 / Malish 7).